The sequence spans 254 residues: Imidazole glycerol phosphate synthase subunit HisF (254 aa).

Active-site residues include Asp-14 and Asp-133.

This sequence belongs to the HisA/HisF family. As to quaternary structure, heterodimer of HisH and HisF.

Its subcellular location is the cytoplasm. It catalyses the reaction 5-[(5-phospho-1-deoxy-D-ribulos-1-ylimino)methylamino]-1-(5-phospho-beta-D-ribosyl)imidazole-4-carboxamide + L-glutamine = D-erythro-1-(imidazol-4-yl)glycerol 3-phosphate + 5-amino-1-(5-phospho-beta-D-ribosyl)imidazole-4-carboxamide + L-glutamate + H(+). It participates in amino-acid biosynthesis; L-histidine biosynthesis; L-histidine from 5-phospho-alpha-D-ribose 1-diphosphate: step 5/9. Functionally, IGPS catalyzes the conversion of PRFAR and glutamine to IGP, AICAR and glutamate. The HisF subunit catalyzes the cyclization activity that produces IGP and AICAR from PRFAR using the ammonia provided by the HisH subunit. The protein is Imidazole glycerol phosphate synthase subunit HisF of Nitratiruptor sp. (strain SB155-2).